Consider the following 925-residue polypeptide: Protein PDC2 (925 aa).

An HTH CENPB-type domain is found at 63–138; the sequence is DANRLRKPNN…LSKMDVNISV (76 aa). Disordered regions lie at residues 510–596, 674–693, and 904–925; these read DNNQ…RNSS, NEKA…SSTA, and PTGG…TGFF. Polar residues predominate over residues 513-537; that stretch reads QNHLSMSQASHNPDYNSNHSNNAIE. A compositionally biased stretch (low complexity) spans 538-563; it reads NTNNRGSNNNNNNNGSSNNINDNDSS. The segment covering 565–596 has biased composition (polar residues); it reads KYLQQNTVDNSTKTGNPGQPNISSMESQRNSS. The span at 674 to 686 shows a compositional bias: basic and acidic residues; it reads NEKAASDQNKSTD. Over residues 904 to 916 the composition is skewed to polar residues; it reads PTGGSNLPDSNNL.

In terms of biological role, essential for the synthesis of pyruvate decarboxylase. May be important for a high basal level of PDC gene expression or play a positive role in the autoregulation control of PDC1 and PDC5. The polypeptide is Protein PDC2 (PDC2) (Saccharomyces cerevisiae (strain ATCC 204508 / S288c) (Baker's yeast)).